A 348-amino-acid polypeptide reads, in one-letter code: UDP-rhamnose/UDP-galactose transporter 2 (348 aa).

10 helical membrane-spanning segments follow: residues 12 to 32 (AVSDVGAWAMNVTSSVGIIMA), 44 to 64 (FSFATTLTGFHFALTALVGMV), 81 to 101 (LLWFSLVANISIAAMNFSLML), 104 to 124 (VGFYQISKLSMIPVVCVMEWV), 133 to 153 (EVKASVMVVVVGVGICTVTDV), 160 to 180 (FICACTAVFSTSLQQISIGSL), 196 to 216 (APIQAISLLIFGPFVDYFLSG), 230 to 250 (LCILLSCALAVFCNISQYLCI), 257 to 277 (SFQVLGHMKTVCVLTLGWLIF), and 286 to 306 (IAGMVLAVVGMVIYSWAVELE).

It belongs to the TPT transporter family. TPT (TC 2.A.7.9) subfamily.

The protein localises to the golgi apparatus membrane. Nucleotide-sugar transporter that transports UDP-rhamnose or UDP-galactose and UMP in a strict counter-exchange mode. The protein is UDP-rhamnose/UDP-galactose transporter 2 of Arabidopsis thaliana (Mouse-ear cress).